The following is a 394-amino-acid chain: Actin-related protein 2 (394 aa).

Residues 160 to 162 (GDG), 214 to 218 (RMIKE), and 305 to 310 (GGSTMY) contribute to the ATP site.

The protein belongs to the actin family. ARP2 subfamily. In terms of assembly, component of the Arp2/3 complex composed of ACTR2/ARP2, ACTR3/ARP3, ARPC1B/p41-ARC, ARPC2/p34-ARC, ARPC3/p21-ARC, ARPC4/p20-ARC and ARPC5/p16-ARC.

The protein localises to the cytoplasm. Its subcellular location is the cytoskeleton. It localises to the cell projection. It is found in the nucleus. Functionally, ATP-binding component of the Arp2/3 complex, a multiprotein complex that mediates actin polymerization upon stimulation by nucleation-promoting factor (NPF). The Arp2/3 complex mediates the formation of branched actin networks in the cytoplasm, providing the force for cell motility. Seems to contact the pointed end of the daughter actin filament. In addition to its role in the cytoplasmic cytoskeleton, the Arp2/3 complex also promotes actin polymerization in the nucleus, thereby regulating gene transcription and repair of damaged DNA. The Arp2/3 complex promotes homologous recombination (HR) repair in response to DNA damage by promoting nuclear actin polymerization, leading to drive motility of double-strand breaks (DSBs). In Gallus gallus (Chicken), this protein is Actin-related protein 2 (ACTR2).